A 305-amino-acid chain; its full sequence is Superkiller complex protein 8 (305 aa).

7 WD repeats span residues 14–57 (AHED…LELQ), 62–101 (GHQL…QIKS), 104–143 (AGPV…KEHS), 146–187 (TRGK…HTLE), 188–227 (GHAM…LAGT), 230–269 (GHGS…CVNT), and 272–305 (DHQD…DCPM).

This sequence belongs to the SKI8 family. In terms of assembly, component of the PAF1 complex. Component of the SKI complex.

It is found in the nucleus. The protein localises to the cytoplasm. Its function is as follows. Component of the PAF1 complex (PAF1C) which has multiple functions during transcription by RNA polymerase II and is implicated in regulation of development and maintenance of embryonic stem cell pluripotency. PAF1C associates with RNA polymerase II through interaction with POLR2A CTD non-phosphorylated and 'Ser-2'- and 'Ser-5'-phosphorylated forms and is involved in transcriptional elongation, acting both independently and synergistically with TCEA1 and in cooperation with the DSIF complex and HTATSF1. Also acts as a component of the SKI complex, a multiprotein complex that assists the RNA-degrading exosome during the mRNA decay and quality-control pathways. The SKI complex catalyzes mRNA extraction from 80S ribosomal complexes in the 3'-5' direction and channels mRNA to the cytosolic exosome for degradation. This is Superkiller complex protein 8 (skic8) from Danio rerio (Zebrafish).